A 243-amino-acid chain; its full sequence is 1-(5-phosphoribosyl)-5-[(5-phosphoribosylamino)methylideneamino] imidazole-4-carboxamide isomerase (243 aa).

Residue Asp8 is the Proton acceptor of the active site. The active-site Proton donor is the Asp129.

It belongs to the HisA/HisF family.

It is found in the cytoplasm. The catalysed reaction is 1-(5-phospho-beta-D-ribosyl)-5-[(5-phospho-beta-D-ribosylamino)methylideneamino]imidazole-4-carboxamide = 5-[(5-phospho-1-deoxy-D-ribulos-1-ylimino)methylamino]-1-(5-phospho-beta-D-ribosyl)imidazole-4-carboxamide. It participates in amino-acid biosynthesis; L-histidine biosynthesis; L-histidine from 5-phospho-alpha-D-ribose 1-diphosphate: step 4/9. The protein is 1-(5-phosphoribosyl)-5-[(5-phosphoribosylamino)methylideneamino] imidazole-4-carboxamide isomerase of Brucella abortus (strain 2308).